Reading from the N-terminus, the 144-residue chain is Protein BUD31 homolog (144 aa).

Positions 2–10 match the Nuclear localization signal motif; it reads PKVRRSRKP.

Belongs to the BUD31 (G10) family.

The protein resides in the nucleus. The sequence is that of Protein BUD31 homolog from Branchiostoma belcheri (Amphioxus).